The primary structure comprises 485 residues: Rhamnulokinase (485 aa).

12 to 16 (ATSGR) serves as a coordination point for ATP. Substrate is bound by residues glycine 80 and 238 to 240 (HDT). The Proton acceptor role is filled by aspartate 239. Threonine 261 lines the ATP pocket. Substrate is bound at residue asparagine 298. Residue glutamate 306 coordinates ATP. A disulfide bond links cysteine 355 and cysteine 372. Glycine 404 provides a ligand contact to ATP.

It belongs to the rhamnulokinase family. It depends on Mg(2+) as a cofactor.

The catalysed reaction is L-rhamnulose + ATP = L-rhamnulose 1-phosphate + ADP + H(+). It participates in carbohydrate degradation; L-rhamnose degradation; glycerone phosphate from L-rhamnose: step 2/3. Involved in the catabolism of L-rhamnose (6-deoxy-L-mannose). Catalyzes the transfer of the gamma-phosphate group from ATP to the 1-hydroxyl group of L-rhamnulose to yield L-rhamnulose 1-phosphate. The protein is Rhamnulokinase of Bacteroides thetaiotaomicron (strain ATCC 29148 / DSM 2079 / JCM 5827 / CCUG 10774 / NCTC 10582 / VPI-5482 / E50).